The chain runs to 413 residues: Multidrug resistance protein MdtA (413 aa).

Residues 1–20 form the signal peptide; sequence MKGSNTFRWAIAIGVVVAAA. 2 disordered regions span residues 31-57 and 391-413; these read SPTAAPGVAAQAQHTAAAGRRGMRDGP and EPQTTMADEKSPSRHEGQKGARA. Low complexity predominate over residues 32–49; it reads PTAAPGVAAQAQHTAAAG. Basic and acidic residues predominate over residues 397–413; sequence ADEKSPSRHEGQKGARA.

It belongs to the membrane fusion protein (MFP) (TC 8.A.1) family. In terms of assembly, part of a tripartite efflux system composed of MdtA, MdtB and MdtC.

The protein resides in the cell inner membrane. The sequence is that of Multidrug resistance protein MdtA from Salmonella typhi.